The following is a 480-amino-acid chain: Aspartyl/glutamyl-tRNA(Asn/Gln) amidotransferase subunit B (480 aa).

The protein belongs to the GatB/GatE family. GatB subfamily. In terms of assembly, heterotrimer of A, B and C subunits.

It carries out the reaction L-glutamyl-tRNA(Gln) + L-glutamine + ATP + H2O = L-glutaminyl-tRNA(Gln) + L-glutamate + ADP + phosphate + H(+). It catalyses the reaction L-aspartyl-tRNA(Asn) + L-glutamine + ATP + H2O = L-asparaginyl-tRNA(Asn) + L-glutamate + ADP + phosphate + 2 H(+). Allows the formation of correctly charged Asn-tRNA(Asn) or Gln-tRNA(Gln) through the transamidation of misacylated Asp-tRNA(Asn) or Glu-tRNA(Gln) in organisms which lack either or both of asparaginyl-tRNA or glutaminyl-tRNA synthetases. The reaction takes place in the presence of glutamine and ATP through an activated phospho-Asp-tRNA(Asn) or phospho-Glu-tRNA(Gln). This chain is Aspartyl/glutamyl-tRNA(Asn/Gln) amidotransferase subunit B, found in Hahella chejuensis (strain KCTC 2396).